The chain runs to 384 residues: uncharacterized protein (384 aa).

This is an uncharacterized protein from Methanocaldococcus jannaschii (strain ATCC 43067 / DSM 2661 / JAL-1 / JCM 10045 / NBRC 100440) (Methanococcus jannaschii).